We begin with the raw amino-acid sequence, 126 residues long: Protein LiaI (126 aa).

A run of 2 helical transmembrane segments spans residues 11 to 31 (FLLI…GFII) and 56 to 76 (IIVG…VVGI).

It localises to the cell membrane. This Bacillus subtilis (strain 168) protein is Protein LiaI (liaI).